A 530-amino-acid chain; its full sequence is Autoinducer-2 kinase (530 aa).

This sequence belongs to the FGGY kinase family.

The protein resides in the cytoplasm. It carries out the reaction (S)-4,5-dihydroxypentane-2,3-dione + ATP = (2S)-2-hydroxy-3,4-dioxopentyl phosphate + ADP + H(+). In terms of biological role, catalyzes the phosphorylation of autoinducer-2 (AI-2) to phospho-AI-2, which subsequently inactivates the transcriptional regulator LsrR and leads to the transcription of the lsr operon. Phosphorylates the ring-open form of (S)-4,5-dihydroxypentane-2,3-dione (DPD), which is the precursor to all AI-2 signaling molecules, at the C5 position. This Escherichia coli (strain ATCC 8739 / DSM 1576 / NBRC 3972 / NCIMB 8545 / WDCM 00012 / Crooks) protein is Autoinducer-2 kinase.